Here is a 60-residue protein sequence, read N- to C-terminus: Potassium channel toxin alpha-KTx 15.8 (60 aa).

Positions 1–22 are cleaved as a signal peptide; that stretch reads MKFSSIILLTLLICSMSIFGNC. Pyrrolidone carboxylic acid is present on Gln23. 3 disulfides stabilise this stretch: Cys30-Cys50, Cys35-Cys55, and Cys39-Cys57.

Belongs to the short scorpion toxin superfamily. Potassium channel inhibitor family. Alpha-KTx 15 subfamily. Expressed by the venom gland.

The protein resides in the secreted. Functionally, blocker of A-type voltage-gated potassium channels of cerebellar granular cells. May also inhibit Kv4/KCND when coexpressed with DPP6 or DPP10. The occlusion of the outer entry of the K(+) conducting pore is partially reversible and affects both open and closed channels. It shares the same target in rat brain than BmTX3 (AC Q8I0L5) and AmmTX3 (AC P60208). Also shows a weak inhibition on Kv1.2/KCNA2 and Kv1.3/KCNA3 voltage-gated potassium channels. The chain is Potassium channel toxin alpha-KTx 15.8 from Olivierus martensii (Manchurian scorpion).